A 237-amino-acid polypeptide reads, in one-letter code: NAD(P)H-hydrate epimerase (237 aa).

In terms of domain architecture, YjeF N-terminal spans 11–223; sequence AASLDRDLMN…GLDIPEYPGV (213 aa). Position 61 to 65 (61 to 65) interacts with (6S)-NADPHX; sequence NNGGD. K(+) contacts are provided by Asn-62 and Asp-123. (6S)-NADPHX is bound by residues 127–133 and Asp-156; that span reads GFSFSGP. Ser-159 lines the K(+) pocket.

It belongs to the NnrE/AIBP family. Requires K(+) as cofactor.

It is found in the cytoplasm. The protein resides in the mitochondrion. The enzyme catalyses (6R)-NADHX = (6S)-NADHX. It carries out the reaction (6R)-NADPHX = (6S)-NADPHX. Its function is as follows. Catalyzes the epimerization of the S- and R-forms of NAD(P)HX, a damaged form of NAD(P)H that is a result of enzymatic or heat-dependent hydration. This is a prerequisite for the S-specific NAD(P)H-hydrate dehydratase to allow the repair of both epimers of NAD(P)HX. This is NAD(P)H-hydrate epimerase from Ajellomyces capsulatus (strain G186AR / H82 / ATCC MYA-2454 / RMSCC 2432) (Darling's disease fungus).